A 176-amino-acid polypeptide reads, in one-letter code: Adenylyl-sulfate kinase (176 aa).

12–19 serves as a coordination point for ATP; the sequence is GLSGAGKS. S86 serves as the catalytic Phosphoserine intermediate.

This sequence belongs to the APS kinase family.

The enzyme catalyses adenosine 5'-phosphosulfate + ATP = 3'-phosphoadenylyl sulfate + ADP + H(+). Its pathway is sulfur metabolism; hydrogen sulfide biosynthesis; sulfite from sulfate: step 2/3. Its function is as follows. Catalyzes the synthesis of activated sulfate. The sequence is that of Adenylyl-sulfate kinase from Gloeothece citriformis (strain PCC 7424) (Cyanothece sp. (strain PCC 7424)).